We begin with the raw amino-acid sequence, 325 residues long: Putative aryl-alcohol dehydrogenase C750.01 (325 aa).

The protein belongs to the aldo/keto reductase family. Aldo/keto reductase 2 subfamily.

The protein is Putative aryl-alcohol dehydrogenase C750.01 of Schizosaccharomyces pombe (strain 972 / ATCC 24843) (Fission yeast).